Consider the following 64-residue polypeptide: Beta-insect depressant toxin BmKIT4 (64 aa).

One can recognise an LCN-type CS-alpha/beta domain in the interval 1 to 61 (DGYIRGSNGC…TWKSESNTCG (61 aa)). Intrachain disulfides connect Cys-10–Cys-60, Cys-14–Cys-35, Cys-21–Cys-42, and Cys-25–Cys-44. Cys-60 bears the Cysteine amide mark.

This sequence belongs to the long (4 C-C) scorpion toxin superfamily. Sodium channel inhibitor family. Beta subfamily. Expressed by the venom gland.

The protein resides in the secreted. Functionally, depressant insect beta-toxins cause a transient contraction paralysis followed by a slow flaccid paralysis. They bind voltage-independently at site-4 of sodium channels (Nav) and shift the voltage of activation toward more negative potentials thereby affecting sodium channel activation and promoting spontaneous and repetitive firing. This toxin is active only on insects. This chain is Beta-insect depressant toxin BmKIT4, found in Olivierus martensii (Manchurian scorpion).